The chain runs to 336 residues: tRNA N6-adenosine threonylcarbamoyltransferase (336 aa).

Residues H112 and H116 each contribute to the Fe cation site. Residues 136–140 (LVSGG), D169, G182, and N276 each bind substrate. Residue D304 participates in Fe cation binding.

The protein belongs to the KAE1 / TsaD family. The cofactor is Fe(2+).

It localises to the cytoplasm. The enzyme catalyses L-threonylcarbamoyladenylate + adenosine(37) in tRNA = N(6)-L-threonylcarbamoyladenosine(37) in tRNA + AMP + H(+). In terms of biological role, required for the formation of a threonylcarbamoyl group on adenosine at position 37 (t(6)A37) in tRNAs that read codons beginning with adenine. Is involved in the transfer of the threonylcarbamoyl moiety of threonylcarbamoyl-AMP (TC-AMP) to the N6 group of A37, together with TsaE and TsaB. TsaD likely plays a direct catalytic role in this reaction. The sequence is that of tRNA N6-adenosine threonylcarbamoyltransferase from Francisella tularensis subsp. holarctica (strain FTNF002-00 / FTA).